The primary structure comprises 168 residues: Pleiotrophin (168 aa).

Residues 1–32 (MSSQQYQQQRRKFAAAFLALIFILAAVDTAEA) form the signal peptide. Disulfide bonds link Cys47-Cys76, Cys55-Cys85, Cys62-Cys89, Cys99-Cys131, and Cys109-Cys141. Chondroitin sulfate binding stretches follow at residues 92–99 (KKQFGAEC) and 123–131 (KRALHNADC). The segment at 139–168 (KPCGKLTKPKPQAESKKKKKEGKKQEKMLD) is disordered. Positions 147-168 (PKPQAESKKKKKEGKKQEKMLD) are chondroitin sulfate A binding.

This sequence belongs to the pleiotrophin family. Interacts with ALK and NEK6. Interacts with PTPRZ1 (via chondroitin sulfate groups); promotes formation of homooligomers; oligomerization impairs tyrosine phosphatase activity. Forms a complex with PTPRZ1 and CTNNB1; this complex inactivates PTPRZ1 protein tyrosine phosphatase activity through PTN interaction and stimulates tyrosine phosphorylation of CTNNB1. Interacts with ITGB3 and ITGA5. Forms a complex with PTPRZ1 and integrin alpha-V/beta-3 (ITGAV:ITGB3) that stimulates endothelial cell migration through ITGB3 'Tyr-773' phosphorylation. Interacts with SDC3 (via heparan sulfate chains); this interaction mediates the neurite outgrowth-promoting signal from PTN to the cytoskeleton of growing neurites; this interaction mediates osteoblast recruitment. Interacts with GPC2 (via heparan sulfate); this interaction promotes neurite outgrowth through binding of PTN with chondroitin sulfate of proteoglycans, thereby releasing PTPRS of chondroitin sulfate proteoglycans (CSPGs) and leading to binding with heparan sulfate of GPC2. Phosphorylated by NEK6. In terms of tissue distribution, osteoblast and brain. Expressed in the follicular epithelium and granulosa cells of the ovary. Strongly expressed in the uterus of newborn mice, and the degree of expression decreased in one-week-old mice, although the expression continues even in the uteri of adult mice. Expression gradually increases from proestrus to estrus, then decreases sharply, and thereafter gradually increased again. strongly expressed in the cochlea of WT mice 1 week after birth, and then the expression decreased and was undetectable by week 8 after birth. Expressed around the cell soma of osteocytes and apparently captured in the unmineralized interstitial matrix surrounding the cells. Furthermore distributed throughout the intraosseous canalicular porosity, being localized in the unmineralized matrix around the cell processes. Strongly expressed in the innermost layer of the periosteum.

It is found in the secreted. Functionally, secreted growth factor that mediates its signal through cell-surface proteoglycan and non-proteoglycan receptors. Binds cell-surface proteoglycan receptor via their chondroitin sulfate (CS) groups. Thereby regulates many processes like cell proliferation, cell survival, cell growth, cell differentiation and cell migration in several tissues namely neuron and bone. Also plays a role in synaptic plasticity and learning-related behavior by inhibiting long-term synaptic potentiation. Binds PTPRZ1, leading to neutralization of the negative charges of the CS chains of PTPRZ1, inducing PTPRZ1 clustering, thereby causing the dimerization and inactivation of its phosphatase activity leading to increased tyrosine phosphorylation of each of the PTPRZ1 substrates like ALK or AFAP1L2 in order to activate the PI3K-AKT pathway. Through PTPRZ1 binding controls oligodendrocyte precursor cell differentiation by enhancing the phosphorylation of AFAP1L2 in order to activate the PI3K-AKT pathway. Forms a complex with PTPRZ1 and integrin alpha-V/beta-3 (ITGAV:ITGB3) that stimulates endothelial cell migration through SRC dephosphorylation and activation that consequently leads to ITGB3 'Tyr-773' phosphorylation. In adult hippocampus promotes dendritic arborization, spine development, and functional integration and connectivity of newborn granule neurons through ALK by activating AKT signaling pathway. Binds GPC2 and chondroitin sulfate proteoglycans (CSPGs) at the neuron surface, leading to abrogation of binding between PTPRS and CSPGs and neurite outgrowth promotion. Binds SDC3 and mediates bone formation by recruiting and attaching osteoblasts/osteoblast precursors to the sites for new bone deposition. Binds ALK and promotes cell survival and cell proliferation through MAPK pathway activation. Inhibits proliferation and enhances differentiation of neural stem cells by inhibiting FGF2-induced fibroblast growth factor receptor signaling pathway. Mediates regulatory mechanisms in normal hemostasis and in hematopoietic regeneration and in maintaining the balance of myeloid and lymphoid regeneration. In addition may play a role in the female reproductive system, auditory response and the progesterone-induced decidualization pathway. This chain is Pleiotrophin, found in Mus musculus (Mouse).